We begin with the raw amino-acid sequence, 380 residues long: Ribosomal RNA large subunit methyltransferase F (380 aa).

Residues 1–32 (MSHKTKPSTQERKAGKPSAPKRKVISKSPNSK) are disordered.

This sequence belongs to the methyltransferase superfamily. METTL16/RlmF family.

Its subcellular location is the cytoplasm. It carries out the reaction adenosine(1618) in 23S rRNA + S-adenosyl-L-methionine = N(6)-methyladenosine(1618) in 23S rRNA + S-adenosyl-L-homocysteine + H(+). Its function is as follows. Specifically methylates the adenine in position 1618 of 23S rRNA. The chain is Ribosomal RNA large subunit methyltransferase F from Shewanella halifaxensis (strain HAW-EB4).